The following is a 317-amino-acid chain: uncharacterized protein (317 aa).

This is an uncharacterized protein from Schizosaccharomyces pombe (strain 972 / ATCC 24843) (Fission yeast).